The primary structure comprises 386 residues: 23S rRNA (uracil(747)-C(5))-methyltransferase RlmC (386 aa).

The [4Fe-4S] cluster site is built by C7, C15, C18, and C94. S-adenosyl-L-methionine contacts are provided by Q219, F248, E269, and N316. C343 serves as the catalytic Nucleophile.

It belongs to the class I-like SAM-binding methyltransferase superfamily. RNA M5U methyltransferase family. RlmC subfamily.

The catalysed reaction is uridine(747) in 23S rRNA + S-adenosyl-L-methionine = 5-methyluridine(747) in 23S rRNA + S-adenosyl-L-homocysteine + H(+). Functionally, catalyzes the formation of 5-methyl-uridine at position 747 (m5U747) in 23S rRNA. This is 23S rRNA (uracil(747)-C(5))-methyltransferase RlmC from Shewanella oneidensis (strain ATCC 700550 / JCM 31522 / CIP 106686 / LMG 19005 / NCIMB 14063 / MR-1).